The sequence spans 89 residues: Small ribosomal subunit protein uS15 (89 aa).

Basic and acidic residues predominate over residues 1-11; sequence MSITAERKAEV. Positions 1–24 are disordered; sequence MSITAERKAEVIKTNAKKAGDTGS.

It belongs to the universal ribosomal protein uS15 family. As to quaternary structure, part of the 30S ribosomal subunit. Forms a bridge to the 50S subunit in the 70S ribosome, contacting the 23S rRNA.

In terms of biological role, one of the primary rRNA binding proteins, it binds directly to 16S rRNA where it helps nucleate assembly of the platform of the 30S subunit by binding and bridging several RNA helices of the 16S rRNA. Forms an intersubunit bridge (bridge B4) with the 23S rRNA of the 50S subunit in the ribosome. This chain is Small ribosomal subunit protein uS15, found in Afipia carboxidovorans (strain ATCC 49405 / DSM 1227 / KCTC 32145 / OM5) (Oligotropha carboxidovorans).